Reading from the N-terminus, the 218-residue chain is Putative glutamine transport system permease protein GlnP (218 aa).

The region spanning 19-208 is the ABC transmembrane type-1 domain; the sequence is TLVTLKYSVI…ILVILISFIA (190 aa). 4 helical membrane-spanning segments follow: residues 25–45, 57–79, 86–108, and 187–207; these read YSVIAVILGLVIGMLLAICKV, FYTSIFRGTPLLVQLSIIYFAAP, FNVFMAGVISFALNSGAYVSEVI, and FFPMLIAACCYYILVILISFI.

The protein belongs to the binding-protein-dependent transport system permease family. HisMQ subfamily.

Its subcellular location is the cell inner membrane. In terms of biological role, part of the binding-protein-dependent transport system for glutamine; probably responsible for the translocation of the substrate across the membrane. This is Putative glutamine transport system permease protein GlnP (glnP) from Rickettsia prowazekii (strain Madrid E).